We begin with the raw amino-acid sequence, 312 residues long: 2,3-dihydroxyphenylpropionate/2,3-dihydroxicinnamic acid 1,2-dioxygenase (312 aa).

His115 acts as the Proton donor in catalysis. His179 functions as the Proton acceptor in the catalytic mechanism.

Belongs to the LigB/MhpB extradiol dioxygenase family. Homotetramer. Requires Fe(2+) as cofactor.

The catalysed reaction is 3-(2,3-dihydroxyphenyl)propanoate + O2 = (2Z,4E)-2-hydroxy-6-oxonona-2,4-dienedioate + H(+). It catalyses the reaction (2E)-3-(2,3-dihydroxyphenyl)prop-2-enoate + O2 = (2Z,4E,7E)-2-hydroxy-6-oxonona-2,4,7-trienedioate + H(+). Its pathway is aromatic compound metabolism; 3-phenylpropanoate degradation. In terms of biological role, catalyzes the non-heme iron(II)-dependent oxidative cleavage of 2,3-dihydroxyphenylpropionic acid and 2,3-dihydroxicinnamic acid into 2-hydroxy-6-ketononadienedioate and 2-hydroxy-6-ketononatrienedioate, respectively. This chain is 2,3-dihydroxyphenylpropionate/2,3-dihydroxicinnamic acid 1,2-dioxygenase, found in Azotobacter vinelandii (strain DJ / ATCC BAA-1303).